The chain runs to 144 residues: Large ribosomal subunit protein uL15 (144 aa).

A disordered region spans residues 1–51; sequence MRLNTIKPGAGSKSAGKRVGRGIGSGLGKTCGRGHKGQKSRAGGFHKVGFE. Positions 21 to 31 are enriched in gly residues; sequence RGIGSGLGKTC.

Belongs to the universal ribosomal protein uL15 family. Part of the 50S ribosomal subunit.

Functionally, binds to the 23S rRNA. This is Large ribosomal subunit protein uL15 from Azoarcus sp. (strain BH72).